The sequence spans 228 residues: uncharacterized protein (228 aa).

Positions threonine 90–lysine 115 are disordered. Residues serine 96–serine 113 are compositionally biased toward low complexity.

The protein localises to the cytoplasm. The protein resides in the cell cortex. Functionally, deletion results in antifungal drug fluconazole-resistant phenotype. This is an uncharacterized protein from Saccharomyces cerevisiae (strain ATCC 204508 / S288c) (Baker's yeast).